Consider the following 358-residue polypeptide: 3-O-methylredipecamine 2-O-methyltransferase IpeOMT3 (358 aa).

Positions 193, 216, 236, 237, and 250 each coordinate S-adenosyl-L-methionine. The active-site Proton acceptor is the His254.

The protein belongs to the class I-like SAM-binding methyltransferase superfamily. Cation-independent O-methyltransferase family. In terms of tissue distribution, expressed in roots.

The protein resides in the cytoplasm. It localises to the cytosol. It catalyses the reaction (S)-reticuline + S-adenosyl-L-methionine = (S)-laudanine + S-adenosyl-L-homocysteine + H(+). It functions in the pathway alkaloid biosynthesis. Functionally, O-methyltransferase involved in the biosynthesis of ipecac and benzylisoquinoline monoterpenoid-isoquinoline alkaloids natural products, starting by the condensation of dopamine and secologanin, and including emetine and cephaeline, drugs used both as anti-protozoal (e.g. treatment of ameobiasis) and as emetic agents. Catalyzes 2-O-methylation of 3-O-methylredipecamine and, with less efficiency, the 7-O-methylation of (S)-coclaurine, (R,S)-N-methylcoclaurine, (R,S)-4'-O-methylcoclaurine, (R,S)-6-O-methyllaudanosoline, nororientaline, (S)-norreticuline and (S)-reticuline. The chain is 3-O-methylredipecamine 2-O-methyltransferase IpeOMT3 from Carapichea ipecacuanha (Ipecac).